The following is a 202-amino-acid chain: Small ribosomal subunit protein uS4 (202 aa).

The tract at residues 16-43 (GELPGLSRKTPRRAYPPGQHGQGRRKRS) is disordered. Residues 90–152 (MRLDNTVFRL…DNSRRMVETN (63 aa)) enclose the S4 RNA-binding domain.

Belongs to the universal ribosomal protein uS4 family. Part of the 30S ribosomal subunit. Contacts protein S5. The interaction surface between S4 and S5 is involved in control of translational fidelity.

Functionally, one of the primary rRNA binding proteins, it binds directly to 16S rRNA where it nucleates assembly of the body of the 30S subunit. Its function is as follows. With S5 and S12 plays an important role in translational accuracy. The protein is Small ribosomal subunit protein uS4 of Crocosphaera subtropica (strain ATCC 51142 / BH68) (Cyanothece sp. (strain ATCC 51142)).